Here is a 198-residue protein sequence, read N- to C-terminus: MEHYLSLLIRSIFIENLALSFFLGMCTFLAVSKKVKTAMGLGIAVIVVQTVAVPANNLIYNYVLKDGVLVSGLDLSFLSFITFIGVIAALVQILEMALDKYFPALYNALGIFLPLITVNCAIFGGVSFMVQRDYNFVESVVYGVGSGAGWMLAIVAMAGIREKMKYSDVPQGLRGLGITFITAGLMALGFMSFSGISL.

A run of 6 helical transmembrane segments spans residues 11 to 31, 39 to 59, 77 to 97, 110 to 130, 140 to 160, and 176 to 196; these read SIFIENLALSFFLGMCTFLAV, MGLGIAVIVVQTVAVPANNLI, FLSFITFIGVIAALVQILEMA, GIFLPLITVNCAIFGGVSFMV, VVYGVGSGAGWMLAIVAMAGI, and LGITFITAGLMALGFMSFSGI.

The protein belongs to the NqrDE/RnfAE family. In terms of assembly, composed of six subunits; NqrA, NqrB, NqrC, NqrD, NqrE and NqrF.

The protein localises to the cell inner membrane. The enzyme catalyses a ubiquinone + n Na(+)(in) + NADH + H(+) = a ubiquinol + n Na(+)(out) + NAD(+). In terms of biological role, NQR complex catalyzes the reduction of ubiquinone-1 to ubiquinol by two successive reactions, coupled with the transport of Na(+) ions from the cytoplasm to the periplasm. NqrA to NqrE are probably involved in the second step, the conversion of ubisemiquinone to ubiquinol. This Aeromonas salmonicida (strain A449) protein is Na(+)-translocating NADH-quinone reductase subunit E.